A 505-amino-acid polypeptide reads, in one-letter code: Chromosomal replication initiator protein DnaA (505 aa).

The segment at 1–90 (MSVELWQQCV…RRSSAPRAAP (90 aa)) is domain I, interacts with DnaA modulators. Positions 91–168 (NAPVSAAVAA…QVEGALKHTS (78 aa)) are domain II. Residues 169–385 (YLNRTFTFDT…GALKRVIAHS (217 aa)) are domain III, AAA+ region. Residues Gly213, Gly215, Lys216, and Thr217 each contribute to the ATP site. A domain IV, binds dsDNA region spans residues 386–505 (HFMGRDITIE…YKNLLRTLTT (120 aa)).

It belongs to the DnaA family. In terms of assembly, oligomerizes as a right-handed, spiral filament on DNA at oriC.

Its subcellular location is the cytoplasm. Plays an essential role in the initiation and regulation of chromosomal replication. ATP-DnaA binds to the origin of replication (oriC) to initiate formation of the DNA replication initiation complex once per cell cycle. Binds the DnaA box (a 9 base pair repeat at the origin) and separates the double-stranded (ds)DNA. Forms a right-handed helical filament on oriC DNA; dsDNA binds to the exterior of the filament while single-stranded (ss)DNA is stabiized in the filament's interior. The ATP-DnaA-oriC complex binds and stabilizes one strand of the AT-rich DNA unwinding element (DUE), permitting loading of DNA polymerase. After initiation quickly degrades to an ADP-DnaA complex that is not apt for DNA replication. Binds acidic phospholipids. The sequence is that of Chromosomal replication initiator protein DnaA from Pseudomonas putida (strain ATCC 700007 / DSM 6899 / JCM 31910 / BCRC 17059 / LMG 24140 / F1).